We begin with the raw amino-acid sequence, 233 residues long: Probable chemoreceptor glutamine deamidase CheD (233 aa).

The protein belongs to the CheD family.

The catalysed reaction is L-glutaminyl-[protein] + H2O = L-glutamyl-[protein] + NH4(+). Probably deamidates glutamine residues to glutamate on methyl-accepting chemotaxis receptors (MCPs), playing an important role in chemotaxis. The chain is Probable chemoreceptor glutamine deamidase CheD from Vibrio cholerae serotype O1 (strain ATCC 39315 / El Tor Inaba N16961).